Here is a 542-residue protein sequence, read N- to C-terminus: Chloride channel CLIC-like protein 1 (542 aa).

Positions 1–18 (MLYSLLLCECLWLITAYA) are cleaved as a signal peptide. Topologically, residues 19–184 (HDDEWIDPTD…EEFFGVDPYN (166 aa)) are lumenal. Residues 185-205 (VFMVLLCLLCIVALVATELWT) form a helical membrane-spanning segment. At 206–216 (YVRWYTQLKRV) the chain is on the cytoplasmic side. Residues 217 to 237 (FFISFLISLGWNWMYLYKLAF) traverse the membrane as a helical segment. The Lumenal segment spans residues 238 to 329 (AQHQAEVAKM…GEFIKALMKE (92 aa)). The helical transmembrane segment at 330–350 (IPVLLHIPVLIIMALAVLSFC) threads the bilayer. Topologically, residues 351 to 542 (YGAGKSVNML…PASTAVEVCG (192 aa)) are cytoplasmic. The disordered stretch occupies residues 369-394 (EAPQALQAGERRRQQKIDYRPHGGAG). Over residues 377–389 (GERRRQQKIDYRP) the composition is skewed to basic and acidic residues. Ser438 and Ser464 each carry phosphoserine. A disordered region spans residues 452 to 542 (AREHPKVVPG…PASTAVEVCG (91 aa)). Positions 480–491 (ESTPTESSTESS) are enriched in low complexity. Thr482 is subject to Phosphothreonine. Residue Ser532 is modified to Phosphoserine.

The protein belongs to the chloride channel MCLC family. Homomultimers. Interacts with mitochondrial protein PIGBOS1 (via C-terminus); the interaction occurs at the mitochondria-associated endoplasmic reticulum (ER) membrane, a zone of contact between the ER and mitochondrial membranes, but does not appear to play a role in ER-mitochondria tethering and is not affected by ER stress. Interacts with CALR.

It localises to the endoplasmic reticulum membrane. It catalyses the reaction chloride(in) = chloride(out). The catalysed reaction is bromide(in) = bromide(out). It carries out the reaction nitrate(in) = nitrate(out). The enzyme catalyses fluoride(in) = fluoride(out). Its function is as follows. Anion-selective channel with Ca(2+)-dependent and voltage-independent gating. Permeable to small monovalent anions with selectivity for bromide &gt; chloride &gt; nitrate &gt; fluoride. Operates in the endoplasmic reticulum (ER) membrane where it mediates chloride efflux to compensate for the loss of positive charges from the ER lumen upon Ca(2+) release. Contributes to the maintenance of ER Ca(2+) pools and activation of unfolded protein response to prevent accumulation of misfolded proteins in the ER lumen. Particularly involved in ER homeostasis mechanisms underlying motor neurons and retinal photoreceptors survival. This Bos taurus (Bovine) protein is Chloride channel CLIC-like protein 1 (CLCC1).